A 269-amino-acid polypeptide reads, in one-letter code: Putative pyruvate, phosphate dikinase regulatory protein (269 aa).

Position 147 to 154 (147 to 154) interacts with ADP; the sequence is GVSRTSKT.

It belongs to the pyruvate, phosphate/water dikinase regulatory protein family. PDRP subfamily.

It catalyses the reaction N(tele)-phospho-L-histidyl/L-threonyl-[pyruvate, phosphate dikinase] + ADP = N(tele)-phospho-L-histidyl/O-phospho-L-threonyl-[pyruvate, phosphate dikinase] + AMP + H(+). The enzyme catalyses N(tele)-phospho-L-histidyl/O-phospho-L-threonyl-[pyruvate, phosphate dikinase] + phosphate + H(+) = N(tele)-phospho-L-histidyl/L-threonyl-[pyruvate, phosphate dikinase] + diphosphate. Bifunctional serine/threonine kinase and phosphorylase involved in the regulation of the pyruvate, phosphate dikinase (PPDK) by catalyzing its phosphorylation/dephosphorylation. This chain is Putative pyruvate, phosphate dikinase regulatory protein, found in Geotalea uraniireducens (strain Rf4) (Geobacter uraniireducens).